Here is a 596-residue protein sequence, read N- to C-terminus: Neuroepithelial cell-transforming gene 1 protein (596 aa).

Met1 bears the N-acetylmethionine mark. The disordered stretch occupies residues 1 to 44 (MEPELAAQKQPRPRRRSRRASGLSTEGATGPSADTSGSELDGRC). The necessary for nuclear localization stretch occupies residues 1–74 (MEPELAAQKQ…LKRKRREKDD (74 aa)). Residues 12–19 (RPRRRSRR) carry the Nuclear localization signal motif. Phosphoserine occurs at positions 21 and 32. A compositionally biased stretch (polar residues) spans 22–38 (GLSTEGATGPSADTSGS). Residues 66–72 (KRKRREK) carry the Nuclear localization signal motif. Residues Ser100, Ser106, and Ser122 each carry the phosphoserine modification. The interval 127–146 (GDHRSPASAQKFSSRSTVPT) is disordered. Polar residues predominate over residues 133-145 (ASAQKFSSRSTVP). Residues 174–356 (RRQEAIYEMS…QGVLSDINLK (183 aa)) form the DH domain. Residues 386–501 (VLLCHGELRS…WFNCIRAAIA (116 aa)) enclose the PH domain. Residue Ser508 is modified to Phosphoserine. The interval 562–596 (MAEDSKSLKTHQTQPGIRRARDKALSGGKRKETLV) is disordered.

Interacts with RHOA in its GTP- and GDP-bound states, and with CDC42 in its GTP-bound state. Interacts with the PDZ 1 domain of BAIAP1. Widely expressed.

Its subcellular location is the cytoplasm. The protein localises to the nucleus. Its function is as follows. Acts as a guanine nucleotide exchange factor (GEF) for RhoA GTPase. May be involved in activation of the SAPK/JNK pathway Stimulates genotoxic stress-induced RHOB activity in breast cancer cells leading to their cell death. The polypeptide is Neuroepithelial cell-transforming gene 1 protein (NET1) (Homo sapiens (Human)).